The chain runs to 215 residues: MNELNAFNEQRAEIYWWLSSLFAHELTKEQLEQYNSFEIRTFLTNLSETPELTDSISSIVTKLNELQTREDAQLELSADFCEAFLGSDKNSALPYASMYLDKSRLLNAKPAQDMRDLLEKYNITQKAEFNEPADHIAIELDFLGNLIVMTNQQTTEPEFEQFMAAQLQFINEQLLSWAPRFNQLCSERDTFGFYAAVTHFLVTFLELDVKFLAGE.

This sequence belongs to the TorD/DmsD family. TorD subfamily.

Its subcellular location is the cytoplasm. Its function is as follows. Involved in the biogenesis of TorA. Acts on TorA before the insertion of the molybdenum cofactor and, as a result, probably favors a conformation of the apoenzyme that is competent for acquiring the cofactor. The chain is Chaperone protein TorD from Aliivibrio salmonicida (strain LFI1238) (Vibrio salmonicida (strain LFI1238)).